The following is a 201-amino-acid chain: Glycerol-3-phosphate acyltransferase (201 aa).

5 consecutive transmembrane segments (helical) span residues methionine 10–leucine 30, leucine 60–alanine 80, alanine 86–phenylalanine 106, leucine 116–valine 136, and alanine 166–isoleucine 186.

The protein belongs to the PlsY family. As to quaternary structure, probably interacts with PlsX.

The protein localises to the cell inner membrane. It carries out the reaction an acyl phosphate + sn-glycerol 3-phosphate = a 1-acyl-sn-glycero-3-phosphate + phosphate. The protein operates within lipid metabolism; phospholipid metabolism. In terms of biological role, catalyzes the transfer of an acyl group from acyl-phosphate (acyl-PO(4)) to glycerol-3-phosphate (G3P) to form lysophosphatidic acid (LPA). This enzyme utilizes acyl-phosphate as fatty acyl donor, but not acyl-CoA or acyl-ACP. This Brucella melitensis biotype 2 (strain ATCC 23457) protein is Glycerol-3-phosphate acyltransferase.